Consider the following 900-residue polypeptide: MPQVDPELFDRGQFQAELALKSSPIAAFKKAIRQFREVLDNRFNSGRDIRRLIEDRAWCVDQILQQAWQRFDWGDDADIALVAVGGYGRGELHPYSDVDLLILLDSEDQESFREPIEGFLTLLWDIGLEVGQSVRSVQQCAEEARADLTVITTLMECRTICGPDSLRQRMLRVTGSAHMWPSKEFFLAKRHEQQRRHAKYNDTEYNLEPNVKGSPGGLRDIQTILWMARRQFGSLNLHALVREGFLVESECSMLASSQEFLWRVRYALHMLAGRAEDRLLFDHQRSIARLFGYEDNDVKLAVERFMQKYYRVVMAISELNDLIIQHFEEVILPCEQPVQIQPLNSRFQLRDGYIEVTHPNVFKRTPFALLEIFVLMAQHPEIKGVRADTIRLLRDSRHLIDDEFRHDIRNTSLFIELFKSSQGIHRNLRRMNRYGILGRYLPEFGHIIGQMQHDLFHIYTVDAHTLNLIKHLRKLNRPEMAEKYPLASKIIDRLPKPELIYIAGLYHDIAKGRGGDHSELGAVDAEAFCQSHQLPLWDTQLVSWLVQNHLVMSTTAQRKDLSDPQVIFDFAQLVGDQTHLDYLYVLTVADINATNPTLWNSWRASLLRQLYTETKRALRRGLENPVDREEQIRQTQTAALDQLVRNGIDQDDAEQLWSQLGDDYFLRHTAGDVAWHTEAILQHPDDGTPLVLIKETTQREFESGSQIFIYAADQHDFFAVTVAAMDQLNLSIQDARIITSTSQFTLDTYIVLDADGDSIGNNPERIAEIREGLIDALKNPDDYPTIIQRRVPRQLKHFAFAPQVTISTDALRQVSVLEVIAPDRPGLLARIGGIFLDFDLSVQNAKIATLGERVEDVFYITDARNQPLADPDLCKRLQAALVEQLSQDNGRDTLPTRINF.

Positions 1 to 342 (MPQVDPELFD…PCEQPVQIQP (342 aa)) are uridylyltransferase. The segment at 343-705 (LNSRFQLRDG…TTQREFESGS (363 aa)) is uridylyl-removing. Residues 461-583 (VDAHTLNLIK…VGDQTHLDYL (123 aa)) form the HD domain. ACT domains lie at 706–789 (QIFI…IIQR) and 816–891 (VLEV…DNGR).

This sequence belongs to the GlnD family. Mg(2+) serves as cofactor.

It carries out the reaction [protein-PII]-L-tyrosine + UTP = [protein-PII]-uridylyl-L-tyrosine + diphosphate. The catalysed reaction is [protein-PII]-uridylyl-L-tyrosine + H2O = [protein-PII]-L-tyrosine + UMP + H(+). Uridylyltransferase (UTase) activity is inhibited by glutamine, while glutamine activates uridylyl-removing (UR) activity. Functionally, modifies, by uridylylation and deuridylylation, the PII regulatory proteins (GlnB and homologs), in response to the nitrogen status of the cell that GlnD senses through the glutamine level. Under low glutamine levels, catalyzes the conversion of the PII proteins and UTP to PII-UMP and PPi, while under higher glutamine levels, GlnD hydrolyzes PII-UMP to PII and UMP (deuridylylation). Thus, controls uridylylation state and activity of the PII proteins, and plays an important role in the regulation of nitrogen assimilation and metabolism. In Pseudomonas aeruginosa (strain LESB58), this protein is Bifunctional uridylyltransferase/uridylyl-removing enzyme.